The sequence spans 147 residues: Phosphoribosyl-AMP cyclohydrolase (147 aa).

Asp89 contributes to the Mg(2+) binding site. Residue Cys90 coordinates Zn(2+). Residues Asp91 and Asp93 each coordinate Mg(2+). Cys106 and Cys113 together coordinate Zn(2+).

The protein belongs to the PRA-CH family. As to quaternary structure, homodimer. Mg(2+) serves as cofactor. Requires Zn(2+) as cofactor.

Its subcellular location is the cytoplasm. The catalysed reaction is 1-(5-phospho-beta-D-ribosyl)-5'-AMP + H2O = 1-(5-phospho-beta-D-ribosyl)-5-[(5-phospho-beta-D-ribosylamino)methylideneamino]imidazole-4-carboxamide. It participates in amino-acid biosynthesis; L-histidine biosynthesis; L-histidine from 5-phospho-alpha-D-ribose 1-diphosphate: step 3/9. Catalyzes the hydrolysis of the adenine ring of phosphoribosyl-AMP. The protein is Phosphoribosyl-AMP cyclohydrolase of Nitrobacter hamburgensis (strain DSM 10229 / NCIMB 13809 / X14).